A 210-amino-acid chain; its full sequence is Holliday junction resolvase RecU (210 aa).

Residues T87, D89, E102, and Q121 each contribute to the Mg(2+) site.

Belongs to the RecU family. The cofactor is Mg(2+).

It is found in the cytoplasm. The catalysed reaction is Endonucleolytic cleavage at a junction such as a reciprocal single-stranded crossover between two homologous DNA duplexes (Holliday junction).. Its function is as follows. Endonuclease that resolves Holliday junction intermediates in genetic recombination. Cleaves mobile four-strand junctions by introducing symmetrical nicks in paired strands. Promotes annealing of linear ssDNA with homologous dsDNA. Required for DNA repair, homologous recombination and chromosome segregation. The chain is Holliday junction resolvase RecU from Lactobacillus delbrueckii subsp. bulgaricus (strain ATCC 11842 / DSM 20081 / BCRC 10696 / JCM 1002 / NBRC 13953 / NCIMB 11778 / NCTC 12712 / WDCM 00102 / Lb 14).